A 242-amino-acid polypeptide reads, in one-letter code: uncharacterized protein (242 aa).

The 69-residue stretch at 8–76 (TPLYIQLKQI…QGKGTFVKSP (69 aa)) folds into the HTH gntR-type domain. The segment at residues 36-55 (ENELCTKYNVSRITVRKAIL) is a DNA-binding region (H-T-H motif).

This is an uncharacterized protein from Bacillus subtilis (strain 168).